Reading from the N-terminus, the 33-residue chain is Photosystem II reaction center protein Psb30 (33 aa).

A helical transmembrane segment spans residues 5 to 25; that stretch reads VVVQLGSLSLIVLAGPIIVLL.

It belongs to the Psb30/Ycf12 family. As to quaternary structure, PSII is composed of 1 copy each of membrane proteins PsbA, PsbB, PsbC, PsbD, PsbE, PsbF, PsbH, PsbI, PsbJ, PsbK, PsbL, PsbM, PsbT, PsbX, PsbY, PsbZ, Psb30/Ycf12, peripheral proteins of the oxygen-evolving complex and a large number of cofactors. It forms dimeric complexes.

It localises to the plastid. The protein localises to the chloroplast thylakoid membrane. Its function is as follows. A core subunit of photosystem II (PSII), probably helps stabilize the reaction center. This Mesostigma viride (Green alga) protein is Photosystem II reaction center protein Psb30.